The primary structure comprises 196 residues: Recombination protein RecR (196 aa).

The C4-type zinc finger occupies 55 to 70 (CELCGNLESESPCSIC). A Toprim domain is found at 78–173 (DIVCVVEEIT…KLSFLAHGIP (96 aa)).

Belongs to the RecR family.

Functionally, may play a role in DNA repair. It seems to be involved in an RecBC-independent recombinational process of DNA repair. It may act with RecF and RecO. The sequence is that of Recombination protein RecR from Neorickettsia sennetsu (strain ATCC VR-367 / Miyayama) (Ehrlichia sennetsu).